Reading from the N-terminus, the 81-residue chain is Cytotoxin I-like P-15 (81 aa).

Residues 1-21 form the signal peptide; it reads MKTLLLTLAAATIVCLDLGYT. 4 cysteine pairs are disulfide-bonded: cysteine 24-cysteine 42, cysteine 35-cysteine 59, cysteine 63-cysteine 74, and cysteine 75-cysteine 80.

This sequence belongs to the three-finger toxin family. Short-chain subfamily. Type IA cytotoxin sub-subfamily. In terms of assembly, monomer in solution; Homodimer and oligomer in the presence of negatively charged lipids forming a pore with a size ranging between 20 and 30 Angstroms. As to expression, expressed by the venom gland.

The protein localises to the secreted. It localises to the target cell membrane. Its function is as follows. Shows cytolytic activity on many different cells by forming pore in lipid membranes. In vivo, increases heart rate or kills the animal by cardiac arrest. In addition, it binds to heparin with high affinity, interacts with Kv channel-interacting protein 1 (KCNIP1) in a calcium-independent manner, and binds to integrin alpha-V/beta-3 (ITGAV/ITGB3) with moderate affinity. The chain is Cytotoxin I-like P-15 from Naja atra (Chinese cobra).